A 795-amino-acid chain; its full sequence is Phospholipase A-2-activating protein (795 aa).

WD repeat units lie at residues 17–56, 63–107, 110–148, 149–188, 190–227, 229–268, and 270–307; these read HELD…RGFT, GHSN…PLYI, GHKD…MTLQ, GHTA…RTFS, HEDC…LGVY, GHTN…QTIR, and PAQS…TASA. S50 is subject to Phosphoserine. Positions 366 to 465 constitute a PFU domain; that stretch reads QWSVSDGRWI…KGQTLGLGNT (100 aa). K529 bears the N6-acetyllysine mark. The region spanning 533–794 is the PUL domain; the sequence is IYFPKKEALT…SECCRLILNL (262 aa). ARM repeat units lie at residues 546 to 588, 589 to 620, 621 to 669, 670 to 715, 716 to 755, and 756 to 795; these read ANPT…GNAS, EKPT…LRLS, IKHP…CFVS, QAGQ…CFHK, DHNI…LISD, and DSNA…LNLL.

The protein belongs to the WD repeat PLAP family. Interacts with ubiquitin. Interacts with UBXN6, VCP and YOD1; may form a complex involved in macroautophagy.

It is found in the nucleus. It localises to the cytoplasm. The protein localises to the synapse. Its function is as follows. Plays a role in protein ubiquitination, sorting and degradation through its association with VCP. Involved in ubiquitin-mediated membrane proteins trafficking to late endosomes in an ESCRT-dependent manner, and hence plays a role in synaptic vesicle recycling. May play a role in macroautophagy, regulating for instance the clearance of damaged lysosomes. Plays a role in cerebellar Purkinje cell development. Positively regulates cytosolic and calcium-independent phospholipase A2 activities in a tumor necrosis factor alpha (TNF-alpha)- or lipopolysaccharide (LPS)-dependent manner, and hence prostaglandin E2 biosynthesis. The chain is Phospholipase A-2-activating protein (Plaa) from Rattus norvegicus (Rat).